A 312-amino-acid polypeptide reads, in one-letter code: Olfactory receptor 8K3 (312 aa).

At 1–25 the chain is on the extracellular side; that stretch reads MEQHNLTTVNEFILTGITDIAELQA. N5 carries an N-linked (GlcNAc...) asparagine glycan. Residues 26–46 form a helical membrane-spanning segment; sequence PLFALFLMIYVISVMGNLGMI. Residues 47–54 lie on the Cytoplasmic side of the membrane; the sequence is VLTKLDSR. A helical membrane pass occupies residues 55 to 75; it reads LQTPMYFFLRHLAFMDLGYST. Over 76–99 the chain is Extracellular; sequence TVGPKMLVNFVVDKNIISYYFCAT. Residues C97 and C189 are joined by a disulfide bond. Residues 100 to 120 traverse the membrane as a helical segment; the sequence is QLAFFLVFIGSELFILSAMSY. Residues 121–139 are Cytoplasmic-facing; that stretch reads DLYVAICNPLLYTVIMSRR. A helical membrane pass occupies residues 140–160; sequence VCQVLVAIPYLYCTFISLLVT. The Extracellular segment spans residues 161–197; sequence IKIFTLSFCGYNVISHFYCDSLPLLPLLCSNTHEIEL. Residues 198 to 217 traverse the membrane as a helical segment; the sequence is IILIFAAIDLISSLLIVLLS. Topologically, residues 218 to 236 are cytoplasmic; it reads YLLILVAILRMNSAGRQKA. The chain crosses the membrane as a helical span at residues 237 to 257; sequence FSTCGAHLTVVIVFYGTLLFM. The Extracellular portion of the chain corresponds to 258–270; it reads YVQPKSSHSFDTD. Residues 271–291 form a helical membrane-spanning segment; the sequence is KVASIFYTLVIPMLNPLIYSL. The Cytoplasmic segment spans residues 292-312; that stretch reads RNKDVKYALRRTWNNLCNIFV.

The protein belongs to the G-protein coupled receptor 1 family.

It localises to the cell membrane. Functionally, odorant receptor. This is Olfactory receptor 8K3 (OR8K3) from Homo sapiens (Human).